Reading from the N-terminus, the 288-residue chain is MSQFSFTKMHGLGNSYIYVNMFEEQIPEEDLALVAEKVSNINTGIGADGMILICPSDVAPVKMRMFNNDGSEGKSCGNGLRCVAKYAYEHKLVEETVFTIETLAGIVTAEVTVEDGVVTLAKIDMGAPRLTRAEIPMLGEGETPFIRENFLYNNHRYAFTAVSMGNPHAVIFVDDVEKAPLTTLGPVLETHEMFPERVNVEFIEILNDDEMNFRVWERGSGVTQACGTGACAAVVAAILNGKMERGKEITVHLAGGDLMIAWTEEGNVLMKGPAEVICRGVYEYKIEA.

Substrate is bound by residues N14 and N67. C76 serves as the catalytic Proton donor. Substrate contacts are provided by residues 77-78 (GN), N166, N199, and 217-218 (ER). Residue C226 is the Proton acceptor of the active site. Residue 227-228 (GT) participates in substrate binding.

This sequence belongs to the diaminopimelate epimerase family. Homodimer.

It is found in the cytoplasm. It catalyses the reaction (2S,6S)-2,6-diaminopimelate = meso-2,6-diaminopimelate. The protein operates within amino-acid biosynthesis; L-lysine biosynthesis via DAP pathway; DL-2,6-diaminopimelate from LL-2,6-diaminopimelate: step 1/1. Catalyzes the stereoinversion of LL-2,6-diaminopimelate (L,L-DAP) to meso-diaminopimelate (meso-DAP), a precursor of L-lysine and an essential component of the bacterial peptidoglycan. This chain is Diaminopimelate epimerase, found in Bacillus cereus (strain B4264).